Consider the following 129-residue polypeptide: C-type natriuretic peptide 1 (129 aa).

A signal peptide spans 1-24 (MSYKRGTCLGFIMLLMVSHHHTKG). Positions 25-107 (KPLSSLQNLS…SRRYRQRNKK (83 aa)) are excised as a propeptide. Cysteine 113 and cysteine 129 are joined by a disulfide.

Belongs to the natriuretic peptide family.

It is found in the secreted. In terms of biological role, hormone which plays a role in endochondral ossification through regulation of cartilaginous growth plate chondrocytes proliferation and differentiation. May also be vasoactive and natriuretic. May be important for freshwater adaptation. This chain is C-type natriuretic peptide 1, found in Aquarana catesbeiana (American bullfrog).